Reading from the N-terminus, the 62-residue chain is Ferredoxin-3 (62 aa).

4Fe-4S ferredoxin-type domains lie at 2 to 28 (SLKI…SAGS) and 29 to 62 (DIYV…IVKA). The [4Fe-4S] cluster site is built by Cys-9, Cys-12, Cys-15, Cys-19, Cys-38, Cys-41, Cys-50, and Cys-54.

It depends on [4Fe-4S] cluster as a cofactor.

Its function is as follows. Ferredoxins are iron-sulfur proteins that transfer electrons in a wide variety of metabolic reactions. The polypeptide is Ferredoxin-3 (Chlorobaculum tepidum (strain ATCC 49652 / DSM 12025 / NBRC 103806 / TLS) (Chlorobium tepidum)).